The primary structure comprises 139 residues: Hydrogenase maturation factor HypA (139 aa).

Residues M1 and H2 each coordinate Ni(2+). Zn(2+) contacts are provided by C73 and C76. Ni(2+) is bound at residue H98. Zn(2+) is bound by residues C110 and C113.

Belongs to the HypA/HybF family. Monomer and homodimer. Could also form hexamers. Forms a complex with HypB.

Involved in the maturation of [NiFe] hydrogenases. Required for nickel insertion into the metal center of the hydrogenase. This chain is Hydrogenase maturation factor HypA, found in Thermococcus kodakarensis (strain ATCC BAA-918 / JCM 12380 / KOD1) (Pyrococcus kodakaraensis (strain KOD1)).